Reading from the N-terminus, the 372-residue chain is BTB/POZ and TAZ domain-containing protein 4 (372 aa).

Positions 14 to 37 (SADSSSVPIPPPLPSKSDGLKKKL) are disordered. The BTB domain occupies 60–128 (ADVVIYTDNG…LYSSCYEKEE (69 aa)). A TAZ-type zinc finger spans residues 238-330 (RIYSQLYEAM…SDQCRVPLCR (93 aa)). The caM-binding stretch occupies residues 341-364 (KKDESRWKLLVKNVLGSKKIGGSP).

Interacts with GTE11/BET10 through the BTB domain. In terms of tissue distribution, preferentially expressed in leaves, stems and flowers.

It is found in the cytoplasm. It participates in protein modification; protein ubiquitination. Its function is as follows. May act as a substrate-specific adapter of an E3 ubiquitin-protein ligase complex (CUL3-RBX1-BTB) which mediates the ubiquitination and subsequent proteasomal degradation of target proteins. The polypeptide is BTB/POZ and TAZ domain-containing protein 4 (BT4) (Arabidopsis thaliana (Mouse-ear cress)).